The chain runs to 226 residues: Gap junction beta-2 protein (226 aa).

Topologically, residues 1-20 (MDWGGLHTILGGVNKHSTSI) are cytoplasmic. A helical transmembrane segment spans residues 21 to 40 (GKIWLTVLFIFRIMILVVAA). Residues 41-75 (KEVWGDEQADFVCNTLQPGCKNVCYDHYFPISHIR) are Extracellular-facing. 3 disulfide bridges follow: Cys-53–Cys-180, Cys-60–Cys-174, and Cys-64–Cys-169. Residues 76–98 (LWALQLIFVSTPALLVAMHVAYY) form a helical membrane-spanning segment. At 99 to 131 (RHEKKRKFIRGEIKTEFKDIEEIKKQKVRIEGS) the chain is on the cytoplasmic side. A helical transmembrane segment spans residues 132–154 (LWWTYTGSIFFRVIFEAAFMYVF). The Extracellular segment spans residues 155–192 (YVMYDGFAMQRLVKCNAWPCPNTVDCFVSRPTEKTVFT). Residues 193–215 (VFMIAVSGICILLNVTELCYLLI) form a helical membrane-spanning segment. Residues 216–226 (RFCSGKSKKPV) lie on the Cytoplasmic side of the membrane.

This sequence belongs to the connexin family. As to quaternary structure, a connexon is composed of a hexamer of connexins. Interacts with CNST.

It is found in the cell membrane. Its subcellular location is the cell junction. The protein localises to the gap junction. One gap junction consists of a cluster of closely packed pairs of transmembrane channels, the connexons, through which materials of low MW diffuse from one cell to a neighboring cell. The sequence is that of Gap junction beta-2 protein (GJB2) from Bos taurus (Bovine).